The chain runs to 593 residues: Kelch-like protein 2 (593 aa).

Residues 1–29 form a disordered region; it reads MESPPLPPACTKQGHQKPLDSKDENPEKH. A compositionally biased stretch (basic and acidic residues) spans 17–29; it reads KPLDSKDENPEKH. The 68-residue stretch at 56–123 folds into the BTB domain; that stretch reads CDVTIVAEDM…VYTAEIQVTE (68 aa). 6 Kelch repeats span residues 308-353, 354-400, 402-447, 449-496, 497-543, and 545-591; these read LMVV…YMAG, LVFA…VLNG, LYAV…VVGG, LYAV…VLNN, LLYA…AVNG, and LYVV…VIDK.

Component of the BCR(KLHL2) E3 ubiquitin ligase complex, at least composed of CUL3 and KLHL2 and RBX1. Binds actin. Interacts with KLHL12. Interacts (via N-terminus) with FYN (via SH3 domain). Detected in brain neurons, oligodendrocytes and astrocytes (at protein level).

The protein localises to the cytoplasm. It localises to the cytoskeleton. The protein resides in the cell projection. Its subcellular location is the ruffle. It is found in the lamellipodium. The protein localises to the cytosol. It functions in the pathway protein modification; protein ubiquitination. Functionally, substrate-specific adapter of a BCR (BTB-CUL3-RBX1) E3 ubiquitin ligase complex that mediates the ubiquitination of target proteins, such as NPTXR, WNK1, WNK3 and WNK4, leading most often to their proteasomal degradation. The BCR(KLHL2) complex catalyzes ubiquitination and degradation of NPTXR. Responsible for degradative ubiquitination of the WNK kinases WNK1, WNK3 and WNK4. Plays a role in the reorganization of the actin cytoskeleton. Promotes growth of cell projections in oligodendrocyte precursors. This chain is Kelch-like protein 2, found in Rattus norvegicus (Rat).